The primary structure comprises 408 residues: MSPCENDTPINWKRNLIVAWLGCFLTGAAFSLVMPFLPLYVEQLGVTGHSALNMWSGIVFSITFLFSAIASPFWGGLADRKGRKLMLLRSALGMGIVMVLMGLAQNIWQFLILRALLGLLGGFVPNANALIATQVPRNKSGWALGTLSTGGVSGALLGPMAGGLLADSYGLRPVFFITASVLILCFFVTLFCIREKFQPVSKKEMLHMREVVTSLKNPKLILSLFVTTLIIQVATGSIAPILTLYVRELAGNVSNVAFISGMIASVPGVAALLSAPRLGKLGDRIGPEKILITALIFSVLLLIPMSYVQTPLQLGILRFLLGAADGALLPAVQTLLVYNSSNQIAGRIFSYNQSFRDIGNVTGPLMGAAISANYGFRAVFLVTAGVVLFNAVYSWNSLRRRRIPQVSN.

10 helical membrane passes run 16–36 (LIVA…VMPF), 58–78 (IVFS…GGLA), 92–112 (LGMG…QFLI), 115–135 (ALLG…ATQV), 146–166 (TLST…GLLA), 173–193 (PVFF…LFCI), 221–241 (ILSL…IAPI), 256–276 (VAFI…LSAP), 290–310 (ILIT…YVQT), and 378–398 (AVFL…WNSL).

The protein belongs to the major facilitator superfamily. DHA1 family. MdtG (TC 2.A.1.2.20) subfamily.

It is found in the cell inner membrane. Functionally, confers resistance to fosfomycin and deoxycholate. This chain is Multidrug resistance protein MdtG, found in Escherichia coli (strain SMS-3-5 / SECEC).